The chain runs to 410 residues: Transcription termination factor, mitochondrial (410 aa).

Residues 1–44 (MIRSLLRSFETALKLHAGLNMHPMHCSRRLLFSQYENRASPSRL) constitute a mitochondrion transit peptide.

This sequence belongs to the mTERF family.

It is found in the mitochondrion. Functionally, transcription termination factor. Binds promoter DNA and regulates mitochondrial replication and transcription. Transcription termination activity may be polarized with highest termination activity occurring when its DNA-binding site is positioned in the reverse orientation with respect to the incoming RNA polymerase. Required for normal topology and maintenance of mitochondrial DNA (mtDNA) levels. Regulates mtDNA replication by promoting replication pausing, possibly by acting as a natural barrier to replication fork progression. Its function in replication pausing prevents unregulated replication that may occur for example by collisions between the machineries of DNA replication and transcription during mtDNA synthesis. This ensures the incorporation of RNA transcripts into replication intermediates at the replication fork and allow for proper fork progression. Shares mtDNA binding sites with the mitochondrial termination factor mTerf5 and thereby may antagonize mTerf5 function during replication to regulate pausing. Likely to function downstream of Dref which activates genes involved in mtDNA replication and maintenance. In Drosophila melanogaster (Fruit fly), this protein is Transcription termination factor, mitochondrial.